The chain runs to 290 residues: 6-phospho-5-dehydro-2-deoxy-D-gluconate aldolase (290 aa).

The active-site Proton donor is D85. 2 residues coordinate Zn(2+): H86 and H180. G181 is a binding site for dihydroxyacetone phosphate. Residue H208 coordinates Zn(2+). Dihydroxyacetone phosphate-binding positions include 209–211 (GAS) and 230–233 (NINT). The residue at position 233 (T233) is a Phosphothreonine.

The protein belongs to the class II fructose-bisphosphate aldolase family. IolJ subfamily. The cofactor is Zn(2+).

It catalyses the reaction 6-phospho-5-dehydro-2-deoxy-D-gluconate = 3-oxopropanoate + dihydroxyacetone phosphate. Its pathway is polyol metabolism; myo-inositol degradation into acetyl-CoA; acetyl-CoA from myo-inositol: step 6/7. Its function is as follows. Produces dihydroxyacetone phosphate (DHAP or glycerone phosphate) and malonic semialdehyde (MSA or 3-oxopropanoate) from 6-phospho-5-dehydro-2-deoxy-D-gluconate (DKGP). This is 6-phospho-5-dehydro-2-deoxy-D-gluconate aldolase (iolJ) from Bacillus velezensis (strain DSM 23117 / BGSC 10A6 / LMG 26770 / FZB42) (Bacillus amyloliquefaciens subsp. plantarum).